The chain runs to 1086 residues: Phosphinothricin tripeptide synthetase PhsC (1086 aa).

The segment at 22 to 43 (RLRAAAAPGPDPAIPRRPDDDG) is disordered. A condensation region spans residues 45-484 (VPLSFAQHRL…LAALPVLTRD (440 aa)). An adenylation region spans residues 510-901 (LEDSARRHPD…GRTDHQVKLR (392 aa)). Residues 983 to 1007 (GKLDREALPDPLAQSGDTAGNRPPL) form a disordered region. One can recognise a Carrier domain in the interval 1006–1081 (PLLDPVEERI…GLARSVSAER (76 aa)). Residue serine 1041 is modified to O-(pantetheine 4'-phosphoryl)serine.

Belongs to the NRP synthetase family. Requires pantetheine 4'-phosphate as cofactor.

It catalyses the reaction holo-[peptidyl-carrier protein] + L-alanine + ATP = L-alanyl-[peptidyl-carrier protein] + AMP + diphosphate. The protein operates within secondary metabolite biosynthesis; bialaphos biosynthesis. Involved in the biosynthesis of phosphinothricin tripeptide (PTT), also known as bialaphos (BA), a natural-product antibiotic and potent herbicide. Adenylates L-alanine and loads it onto a peptidyl carrier domain via a thioester linkage to the phosphopanthetheine moiety. Shows weaker activity with aminobutyric acid and L-serine. The sequence is that of Phosphinothricin tripeptide synthetase PhsC from Streptomyces viridochromogenes (strain DSM 40736 / JCM 4977 / BCRC 1201 / Tue 494).